A 462-amino-acid chain; its full sequence is tRNA-2-methylthio-N(6)-dimethylallyladenosine synthase (462 aa).

Positions 28-144 constitute an MTTase N-terminal domain; the sequence is KKLFVKTYGC…LPKMMEAVNA (117 aa). Residues Cys-37, Cys-73, Cys-107, Cys-181, Cys-185, and Cys-188 each contribute to the [4Fe-4S] cluster site. In terms of domain architecture, Radical SAM core spans 167–398; that stretch reads ATRGPTAFLT…QALLTQQQRA (232 aa). The region spanning 401-462 is the TRAM domain; sequence DAMVGRRVKV…KTNSLTGRLV (62 aa).

It belongs to the methylthiotransferase family. MiaB subfamily. As to quaternary structure, monomer. [4Fe-4S] cluster is required as a cofactor.

The protein localises to the cytoplasm. It carries out the reaction N(6)-dimethylallyladenosine(37) in tRNA + (sulfur carrier)-SH + AH2 + 2 S-adenosyl-L-methionine = 2-methylsulfanyl-N(6)-dimethylallyladenosine(37) in tRNA + (sulfur carrier)-H + 5'-deoxyadenosine + L-methionine + A + S-adenosyl-L-homocysteine + 2 H(+). In terms of biological role, catalyzes the methylthiolation of N6-(dimethylallyl)adenosine (i(6)A), leading to the formation of 2-methylthio-N6-(dimethylallyl)adenosine (ms(2)i(6)A) at position 37 in tRNAs that read codons beginning with uridine. The chain is tRNA-2-methylthio-N(6)-dimethylallyladenosine synthase from Jannaschia sp. (strain CCS1).